A 187-amino-acid chain; its full sequence is Plasmodium-specific hydrophobic abundant protein (187 aa).

The N-terminal stretch at 1–18 is a signal peptide; it reads MMKYVFVALCLFAVVALA.

This sequence to HAP-S protein.

It localises to the membrane. This is Plasmodium-specific hydrophobic abundant protein from Physarum polycephalum (Slime mold).